The chain runs to 302 residues: Enoyl-CoA delta isomerase 1, mitochondrial (302 aa).

A mitochondrion-targeting transit peptide spans 1–41 (MALVASVRVPARVLLRAGARLPGAALGRTERAAGGGDGARR). N6-acetyllysine; alternate is present on lysine 61. Lysine 61 carries the N6-succinyllysine; alternate modification. Residue lysine 84 is modified to N6-succinyllysine. The residue at position 89 (lysine 89) is an N6-acetyllysine. Substrate-binding positions include 106–110 (AGLDL), glycine 153, and asparagine 177. Position 283 is an N6-acetyllysine; alternate (lysine 283). Lysine 283 carries the N6-succinyllysine; alternate modification. The residue at position 288 (lysine 288) is an N6-succinyllysine.

It belongs to the enoyl-CoA hydratase/isomerase family. As to quaternary structure, homotrimer. Expressed in liver (at protein level).

Its subcellular location is the mitochondrion matrix. The enzyme catalyses a (3Z)-enoyl-CoA = a 4-saturated (2E)-enoyl-CoA. It catalyses the reaction a (3E)-enoyl-CoA = a 4-saturated (2E)-enoyl-CoA. The catalysed reaction is (3Z)-octenoyl-CoA = (2E)-octenoyl-CoA. It carries out the reaction (2E)-tetradecenoyl-CoA = (3Z)-tetradecenoyl-CoA. The enzyme catalyses (3Z)-dodecenoyl-CoA = (2E)-dodecenoyl-CoA. It catalyses the reaction (3Z)-hexenoyl-CoA = (2E)-hexenoyl-CoA. The catalysed reaction is (3Z)-decenoyl-CoA = (2E)-decenoyl-CoA. It functions in the pathway lipid metabolism; fatty acid beta-oxidation. Functionally, key enzyme of fatty acid beta-oxidation. Able to isomerize both 3-cis (3Z) and 3-trans (3E) double bonds into the 2-trans (2E) form in a range of enoyl-CoA species, with a preference for (3Z)-enoyl-CoAs over (3E)-enoyl-CoAs. The catalytic efficiency of this enzyme is not affected by the fatty acyl chain length. The protein is Enoyl-CoA delta isomerase 1, mitochondrial (ECI1) of Homo sapiens (Human).